The sequence spans 522 residues: Flavin-dependent halogenase armH1 (522 aa).

Residues Gly16, Ala19, and Glu49 each contribute to the FAD site. The chloride site is built by Ser328 and Gly329. Ile330 contacts FAD.

It belongs to the flavin-dependent halogenase family.

The enzyme catalyses melleolide F + FADH2 + chloride + O2 = 6'-chloromelleolide F + FAD + 2 H2O + H(+). In terms of biological role, flavin-dependent halogenase involved in the biosynthesis of melleolides, a range of antifungal and phytotoxic polyketide derivatives composed of an orsellinic acid (OA) moiety esterified to various sesquiterpene alcohols. The halogenase catalyzes the transfer of a single chlorine atom to the melleolide backbone, resulting in a 6'-chloromelleolide product. The enzyme acts on free substrate and does not depend on carrier-protein-dependent acceptor molecules. The chain is Flavin-dependent halogenase armH1 from Armillaria mellea (Honey mushroom).